The following is a 245-amino-acid chain: 3-deoxy-manno-octulosonate cytidylyltransferase (245 aa).

This sequence belongs to the KdsB family.

The protein localises to the cytoplasm. The catalysed reaction is 3-deoxy-alpha-D-manno-oct-2-ulosonate + CTP = CMP-3-deoxy-beta-D-manno-octulosonate + diphosphate. It participates in nucleotide-sugar biosynthesis; CMP-3-deoxy-D-manno-octulosonate biosynthesis; CMP-3-deoxy-D-manno-octulosonate from 3-deoxy-D-manno-octulosonate and CTP: step 1/1. Its pathway is bacterial outer membrane biogenesis; lipopolysaccharide biosynthesis. Functionally, activates KDO (a required 8-carbon sugar) for incorporation into bacterial lipopolysaccharide in Gram-negative bacteria. In Acidobacterium capsulatum (strain ATCC 51196 / DSM 11244 / BCRC 80197 / JCM 7670 / NBRC 15755 / NCIMB 13165 / 161), this protein is 3-deoxy-manno-octulosonate cytidylyltransferase.